The chain runs to 583 residues: Arginine--tRNA ligase (583 aa).

The 'HIGH' region motif lies at 121-131 (ANPTGPLHLGH).

The protein belongs to the class-I aminoacyl-tRNA synthetase family. Monomer.

It is found in the cytoplasm. It catalyses the reaction tRNA(Arg) + L-arginine + ATP = L-arginyl-tRNA(Arg) + AMP + diphosphate. This chain is Arginine--tRNA ligase (argS), found in Aquifex aeolicus (strain VF5).